Here is a 77-residue protein sequence, read N- to C-terminus: P fimbrial regulatory protein KS71A (77 aa).

The protein is P fimbrial regulatory protein KS71A (KS71A) of Escherichia coli.